A 383-amino-acid chain; its full sequence is Erythronate-4-phosphate dehydrogenase (383 aa).

Substrate-binding residues include S45 and T66. NAD(+) contacts are provided by residues D146, T174, 205–207 (ASR), and D231. R207 is an active-site residue. Residue E236 is part of the active site. H253 functions as the Proton donor in the catalytic mechanism. G256 is a binding site for NAD(+). Y257 lines the substrate pocket.

Belongs to the D-isomer specific 2-hydroxyacid dehydrogenase family. PdxB subfamily. Homodimer.

The protein resides in the cytoplasm. It catalyses the reaction 4-phospho-D-erythronate + NAD(+) = (R)-3-hydroxy-2-oxo-4-phosphooxybutanoate + NADH + H(+). It functions in the pathway cofactor biosynthesis; pyridoxine 5'-phosphate biosynthesis; pyridoxine 5'-phosphate from D-erythrose 4-phosphate: step 2/5. In terms of biological role, catalyzes the oxidation of erythronate-4-phosphate to 3-hydroxy-2-oxo-4-phosphonooxybutanoate. The chain is Erythronate-4-phosphate dehydrogenase from Pseudomonas entomophila (strain L48).